The primary structure comprises 397 residues: L-asparaginase-like protein CG4372 (397 aa).

An N-terminal signal peptide occupies residues 1-22; sequence MLAQSCCLRLLILLLLFTTIGS. 3 disulfide bridges follow: Cys90/Cys95, Cys189/Cys205, and Cys344/Cys371.

This sequence belongs to the Ntn-hydrolase family.

The protein is L-asparaginase-like protein CG4372 of Drosophila melanogaster (Fruit fly).